Here is a 140-residue protein sequence, read N- to C-terminus: Fluoride-specific ion channel FluC 1 (140 aa).

4 consecutive transmembrane segments (helical) span residues 3 to 23 (TGAT…GAAA), 38 to 58 (APLW…GLVL), 80 to 100 (ILYP…STVM), and 113 to 133 (IAGV…ALWC). Gly-91 and Thr-94 together coordinate Na(+).

Belongs to the fluoride channel Fluc/FEX (TC 1.A.43) family.

It is found in the cell membrane. It catalyses the reaction fluoride(in) = fluoride(out). Its activity is regulated as follows. Na(+) is not transported, but it plays an essential structural role and its presence is essential for fluoride channel function. Fluoride-specific ion channel. Important for reducing fluoride concentration in the cell, thus reducing its toxicity. The polypeptide is Fluoride-specific ion channel FluC 1 (Corynebacterium jeikeium (strain K411)).